The sequence spans 134 residues: ATP synthase epsilon chain (134 aa).

This sequence belongs to the ATPase epsilon chain family. In terms of assembly, F-type ATPases have 2 components, CF(1) - the catalytic core - and CF(0) - the membrane proton channel. CF(1) has five subunits: alpha(3), beta(3), gamma(1), delta(1), epsilon(1). CF(0) has three main subunits: a, b and c.

Its subcellular location is the cell membrane. Produces ATP from ADP in the presence of a proton gradient across the membrane. The polypeptide is ATP synthase epsilon chain (Listeria welshimeri serovar 6b (strain ATCC 35897 / DSM 20650 / CCUG 15529 / CIP 8149 / NCTC 11857 / SLCC 5334 / V8)).